We begin with the raw amino-acid sequence, 159 residues long: Phosphopantetheine adenylyltransferase (159 aa).

Threonine 10 is a substrate binding site. Residues 10–11 (TF) and histidine 18 contribute to the ATP site. 3 residues coordinate substrate: lysine 42, leucine 74, and arginine 88. Residues 89–91 (GMR), glutamate 99, and 124–130 (WSYVSST) each bind ATP.

Belongs to the bacterial CoaD family. In terms of assembly, homohexamer. Mg(2+) is required as a cofactor.

The protein resides in the cytoplasm. The catalysed reaction is (R)-4'-phosphopantetheine + ATP + H(+) = 3'-dephospho-CoA + diphosphate. The protein operates within cofactor biosynthesis; coenzyme A biosynthesis; CoA from (R)-pantothenate: step 4/5. Reversibly transfers an adenylyl group from ATP to 4'-phosphopantetheine, yielding dephospho-CoA (dPCoA) and pyrophosphate. The sequence is that of Phosphopantetheine adenylyltransferase from Mannheimia succiniciproducens (strain KCTC 0769BP / MBEL55E).